Consider the following 471-residue polypeptide: Protoheme IX farnesyltransferase, mitochondrial (471 aa).

Residues methionine 1 to isoleucine 60 constitute a mitochondrion transit peptide. Helical transmembrane passes span alanine 188–alanine 208, isoleucine 247–leucine 267, isoleucine 287–alanine 307, leucine 312–phenylalanine 332, leucine 368–valine 388, and lysine 430–lysine 450.

It belongs to the UbiA prenyltransferase family.

It localises to the mitochondrion membrane. It carries out the reaction heme b + (2E,6E)-farnesyl diphosphate + H2O = Fe(II)-heme o + diphosphate. In terms of biological role, converts protoheme IX and farnesyl diphosphate to heme O. The protein is Protoheme IX farnesyltransferase, mitochondrial (COX10) of Yarrowia lipolytica (strain CLIB 122 / E 150) (Yeast).